A 341-amino-acid polypeptide reads, in one-letter code: S-adenosylmethionine:tRNA ribosyltransferase-isomerase (341 aa).

It belongs to the QueA family. Monomer.

It localises to the cytoplasm. It catalyses the reaction 7-aminomethyl-7-carbaguanosine(34) in tRNA + S-adenosyl-L-methionine = epoxyqueuosine(34) in tRNA + adenine + L-methionine + 2 H(+). It functions in the pathway tRNA modification; tRNA-queuosine biosynthesis. Its function is as follows. Transfers and isomerizes the ribose moiety from AdoMet to the 7-aminomethyl group of 7-deazaguanine (preQ1-tRNA) to give epoxyqueuosine (oQ-tRNA). The chain is S-adenosylmethionine:tRNA ribosyltransferase-isomerase from Clostridium botulinum (strain Langeland / NCTC 10281 / Type F).